The sequence spans 214 residues: Phosphatidylserine decarboxylase proenzyme (214 aa).

Residue Ser-182 is the Schiff-base intermediate with substrate; via pyruvic acid of the active site. Pyruvic acid (Ser); by autocatalysis is present on Ser-182.

The protein belongs to the phosphatidylserine decarboxylase family. PSD-A subfamily. In terms of assembly, heterodimer of a large membrane-associated beta subunit and a small pyruvoyl-containing alpha subunit. Requires pyruvate as cofactor. Post-translationally, is synthesized initially as an inactive proenzyme. Formation of the active enzyme involves a self-maturation process in which the active site pyruvoyl group is generated from an internal serine residue via an autocatalytic post-translational modification. Two non-identical subunits are generated from the proenzyme in this reaction, and the pyruvate is formed at the N-terminus of the alpha chain, which is derived from the carboxyl end of the proenzyme. The post-translation cleavage follows an unusual pathway, termed non-hydrolytic serinolysis, in which the side chain hydroxyl group of the serine supplies its oxygen atom to form the C-terminus of the beta chain, while the remainder of the serine residue undergoes an oxidative deamination to produce ammonia and the pyruvoyl prosthetic group on the alpha chain.

Its subcellular location is the cell membrane. It carries out the reaction a 1,2-diacyl-sn-glycero-3-phospho-L-serine + H(+) = a 1,2-diacyl-sn-glycero-3-phosphoethanolamine + CO2. Its pathway is phospholipid metabolism; phosphatidylethanolamine biosynthesis; phosphatidylethanolamine from CDP-diacylglycerol: step 2/2. Functionally, catalyzes the formation of phosphatidylethanolamine (PtdEtn) from phosphatidylserine (PtdSer). This Burkholderia cenocepacia (strain ATCC BAA-245 / DSM 16553 / LMG 16656 / NCTC 13227 / J2315 / CF5610) (Burkholderia cepacia (strain J2315)) protein is Phosphatidylserine decarboxylase proenzyme.